Consider the following 510-residue polypeptide: MKERLVIFDTTLRDGEQSPGASMTMEEKVRIARQLERMGVDVIEAGFPAASKGDFEAVKAVAEAVSNSTVCGLSRAIEADINRAGEALQANQNMRIHTFIATSPIHMKNKLRMSPDRVIEQAIKAVKWARQYTDNVEFSPEDAGRSEIDFLCRILEAVIDAGARTLNIPDTVGYTMPDQFGGLIRTLRERIPNSDKAVFSVHCHNDLGLAVANSLSAVMNGARQVECTINGLGERAGNAALEEVVMAVRTRQDYFPCDTRIDTTQIVSTSKLVSGITGFPVQPNKAIVGANAFAHESGIHQDGVLKHRETYEIMRAEDVGWGANKLLLGKHSGRNAFRSRLKELGIELESEEKLNTIFIRFKDLADKKHEIFDEDLHALVSDEAQIPEEHYRLLSLVAHSETGEIPFAQVVIATGNNEQQAESEGSGPVDATFRAIEKILNSKAELQLFSVNNITSGTDALGEVTVRLQKVGRIVNGHGADTDIIAASAKAYLNACNKLHSSLERTHPQV.

The 263-residue stretch at 5-267 (LVIFDTTLRD…DTRIDTTQIV (263 aa)) folds into the Pyruvate carboxyltransferase domain. Residues Asp14, His202, His204, and Asn238 each contribute to the Mn(2+) site. The tract at residues 392 to 510 (RLLSLVAHSE…SSLERTHPQV (119 aa)) is regulatory domain.

The protein belongs to the alpha-IPM synthase/homocitrate synthase family. LeuA type 1 subfamily. As to quaternary structure, homodimer. Requires Mn(2+) as cofactor.

It localises to the cytoplasm. It catalyses the reaction 3-methyl-2-oxobutanoate + acetyl-CoA + H2O = (2S)-2-isopropylmalate + CoA + H(+). The protein operates within amino-acid biosynthesis; L-leucine biosynthesis; L-leucine from 3-methyl-2-oxobutanoate: step 1/4. Its function is as follows. Catalyzes the condensation of the acetyl group of acetyl-CoA with 3-methyl-2-oxobutanoate (2-ketoisovalerate) to form 3-carboxy-3-hydroxy-4-methylpentanoate (2-isopropylmalate). The polypeptide is 2-isopropylmalate synthase (Nitrosomonas eutropha (strain DSM 101675 / C91 / Nm57)).